Consider the following 302-residue polypeptide: Polyadenylate-binding protein 2 (302 aa).

A compositionally biased stretch (low complexity) spans 1-12; the sequence is MAAAAAAAAAAG. A disordered region spans residues 1-111; the sequence is MAAAAAAAAA…EADPGDGAIE (111 aa). Alanine 2 carries the N-acetylalanine modification. Positions 2–141 are interaction with SKIP; it reads AAAAAAAAAA…LKELQNEVEK (140 aa). Residue arginine 17 is modified to Omega-N-methylarginine. Serine 19 is modified (phosphoserine). Residues 30 to 47 are compositionally biased toward gly residues; the sequence is GAGGEAGEGDPGGAGDYG. A compositionally biased stretch (acidic residues) spans 51–68; that stretch reads ESEELEPGELLPEPEPEE. The residue at position 52 (serine 52) is a Phosphoserine. Residues 73–83 are compositionally biased toward pro residues; the sequence is PRAPPGAPGPG. Serine 91 carries the phosphoserine modification. Residues 111-147 adopt a coiled-coil conformation; sequence EDPELEAIKARVREMEEEAEKLKELQNEVEKQMNMSP. The stimulates PAPOLA stretch occupies residues 115–143; the sequence is LEAIKARVREMEEEAEKLKELQNEVEKQM. Phosphoserine is present on residues serine 146 and serine 231. In terms of domain architecture, RRM spans 168 to 245; that stretch reads RSIYVGNVDY…RQIKVIPKRT (78 aa). Asymmetric dimethylarginine; alternate occurs at positions 234, 255, and 259. Omega-N-methylarginine; alternate is present on residues arginine 234, arginine 255, and arginine 259. Residues 255 to 302 are strong poly(A) affinity and self-association; the sequence is RGFPRSRYRARTTNYNSSRSRFYSGFNSRPRGRIYRGRARATSWYSPY. Asymmetric dimethylarginine occurs at positions 261, 263, 265, 273, 275, 283, 285, 287, 290, 292, and 294. Residues 282–302 form an interaction with PAPOLA region; sequence SRPRGRIYRGRARATSWYSPY.

Monomer and homooligomer. Identified in a IGF2BP1-dependent mRNP granule complex containing untranslated mRNAs. Binds RNA as a monomer and oligomerizes when bound to poly(A). Interacts with PAPOLA, but only in presence of oligo(A) RNA. Interacts with NUDT21/CPSF5 and transportin. Associates in a ternary complex with CPSF4 and NS/NS1 and interaction with NS/NS1, blocks nuclear export of host cell mRNAs. Associates in a single complex with SKIP and MYOD1 and interacts with SKIP in differentiated myocytes. May interact with SETX. Interacts (via RRM domain and C-terminal arginine-rich region) with ZFP36 (via hypophosphorylated form); this interaction occurs in the nucleus in a RNA-independent manner, decreases in presence of single-stranded poly(A) RNA-oligomer and in a p38-dependent-manner and may down-regulated RNA poly(A) polymerase activity. Component of the poly(A) tail exosome targeting (PAXT) complex composed of PABPN1, ZFC3H1 and MTREX. Interacts with ZFC3H1 in a RNase-insensitive manner. Interacts with FRG1. Interacts with ZC3H11A. In terms of processing, arginine dimethylation is asymmetric and involves PRMT1 and PRMT3. It does not influence the RNA binding properties. In terms of tissue distribution, ubiquitous.

Its subcellular location is the cytoplasm. The protein resides in the nucleus. It is found in the nucleus speckle. Its function is as follows. Involved in the 3'-end formation of mRNA precursors (pre-mRNA) by the addition of a poly(A) tail of 200-250 nt to the upstream cleavage product. Stimulates poly(A) polymerase (PAPOLA) conferring processivity on the poly(A) tail elongation reaction and also controls the poly(A) tail length. Increases the affinity of poly(A) polymerase for RNA. Is also present at various stages of mRNA metabolism including nucleocytoplasmic trafficking and nonsense-mediated decay (NMD) of mRNA. Cooperates with SKIP to synergistically activate E-box-mediated transcription through MYOD1 and may regulate the expression of muscle-specific genes. Binds to poly(A) and to poly(G) with high affinity. May protect the poly(A) tail from degradation. Subunit of the trimeric poly(A) tail exosome targeting (PAXT) complex, a complex that directs a subset of long and polyadenylated poly(A) RNAs for exosomal degradation. The RNA exosome is fundamental for the degradation of RNA in eukaryotic nuclei. Substrate targeting is facilitated by its cofactor MTREX, which links to RNA-binding protein adapters. The chain is Polyadenylate-binding protein 2 (Pabpn1) from Mus musculus (Mouse).